We begin with the raw amino-acid sequence, 383 residues long: tRNA-specific 2-thiouridylase MnmA (383 aa).

Residues 31 to 38 (GLSGGVDS) and L57 contribute to the ATP site. Catalysis depends on C118, which acts as the Nucleophile. Residues C118 and C217 are joined by a disulfide bond. Residue G143 participates in ATP binding. Residues 167 to 169 (KDQ) are interaction with tRNA. C217 functions as the Cysteine persulfide intermediate in the catalytic mechanism. The interval 322–323 (RY) is interaction with tRNA.

It belongs to the MnmA/TRMU family.

The protein resides in the cytoplasm. It catalyses the reaction S-sulfanyl-L-cysteinyl-[protein] + uridine(34) in tRNA + AH2 + ATP = 2-thiouridine(34) in tRNA + L-cysteinyl-[protein] + A + AMP + diphosphate + H(+). Functionally, catalyzes the 2-thiolation of uridine at the wobble position (U34) of tRNA, leading to the formation of s(2)U34. This is tRNA-specific 2-thiouridylase MnmA from Synechococcus sp. (strain RCC307).